Consider the following 779-residue polypeptide: MVEYTAEFTAEEQALIDKEFARLGESTYLDHAGTTLYAESQVLSAAQQLQRDVICNPHTCRATGDYVDQVRYRILEFFNTNADDYHVVFTANATAALRLVADHFDFAGDGNFHYCQENHTSVLGMRQLVKAKGIYMLTKDDIELNVLDQPSTPAPAAAATAQANSLVTFSAQCNFSGYKMPLTVIEQIQKRGLQQLGKCIWSAESQPAAKNVDSNYYVCLDAAAFAASSPLDLQRFRPDFVCVSFYKIFGYPTGVGGLLVSRRGAEVLRKRFYGGGTINYAYPHTMEHQLRNVFHERFEDGTLPFLSIVELLQGFRTLERLVPGRSIERISRHVHGLARYCEHQLKQLKHPNGAPLITLYNHAGYEDRAKQGGTVAFNVRTNTGDYVGFGEVACMAALHRILLRTGCFCNVGACQHFLQLNDETMDAIYKRAGRICGDYFDLLDGQPTGAVRVSFGYMTRIQDVDRFLQMLRNSYLVIAKPQQRFSFIEQQAELLPKALQQRAQRLRPRLLQLAIYPVKSCAAFKIDSSTGSWPLTKQGLQYDREWMIVDMNGMALTQKRCTDLCLIQPRIVGDQLELHYAETSCSMPLSLSVQAANSARCHSKVCRQAIEGYDCGDEVATWLSQSLGLEGVRLLRQSAQRSAPGTQQQQLSLVNQAQFLLVNRASVRSLQFEESLDETVDRFRANIIIDTGTPFEELTYTQLRIGDILFQVDGPCQRCDMICINQRTGERSPETLTTIARMQSGKMRFGIYISRLPSETDDRLEQQQQLTCGDVIVVS.

K247 carries the N6-(pyridoxal phosphate)lysine modification. Residue C409 is part of the active site. One can recognise an MOSC domain in the interval 624–779; that stretch reads SQSLGLEGVR…LTCGDVIVVS (156 aa). A Phosphoserine modification is found at S732.

This sequence belongs to the class-V pyridoxal-phosphate-dependent aminotransferase family. MOCOS subfamily. Requires pyridoxal 5'-phosphate as cofactor.

It carries out the reaction Mo-molybdopterin + L-cysteine + AH2 = thio-Mo-molybdopterin + L-alanine + A + H2O. Its pathway is cofactor biosynthesis; molybdopterin biosynthesis. In terms of biological role, sulfurates the molybdenum cofactor. Sulfation of molybdenum is essential for xanthine dehydrogenase (XDH) and aldehyde oxidase (ADO) enzymes in which molybdenum cofactor is liganded by 1 oxygen and 1 sulfur atom in active form. This Drosophila mojavensis (Fruit fly) protein is Molybdenum cofactor sulfurase.